We begin with the raw amino-acid sequence, 112 residues long: Nucleoid-associated protein BCI_0116 (112 aa).

It belongs to the YbaB/EbfC family. Homodimer.

The protein resides in the cytoplasm. It localises to the nucleoid. In terms of biological role, binds to DNA and alters its conformation. May be involved in regulation of gene expression, nucleoid organization and DNA protection. This Baumannia cicadellinicola subsp. Homalodisca coagulata protein is Nucleoid-associated protein BCI_0116.